The following is a 569-amino-acid chain: AP-4 complex accessory subunit Tepsin (569 aa).

The ENTH domain occupies 8–141 (RDRLSFLHRL…FSDALPQPPS (134 aa)). The disordered stretch occupies residues 196-298 (VRPGPDNPCT…SGASREPGDL (103 aa)). A compositionally biased stretch (polar residues) spans 219–229 (VTPSASHTHPN). Residues 260–292 (SSPSSQNSSCTSNLSRASDSVSRSGSDSHSGAS) are compositionally biased toward low complexity. Serine 400 is subject to Phosphoserine. Residues 467–524 (VPRSPVPTPSPDTLPPALQDPGELRTQLVCSSEPGTGSEQRLENTDTPKDSSSPCPWS) form a disordered region. The span at 470 to 480 (SPVPTPSPDTL) shows a compositional bias: pro residues. The span at 494–505 (LVCSSEPGTGSE) shows a compositional bias: polar residues. The segment covering 506 to 515 (QRLENTDTPK) has biased composition (basic and acidic residues). Residues 525-535 (PNSLFAGMELV) are interaction with AP4B1. Residues 559 to 569 (SEPSAFAFLNM) are interaction with AP4E1.

In terms of assembly, interacts with AP4B1 and AP4E1; the interaction is direct and mediates the association of TEPSIN with the adapter-like complex 4 (AP-4), a heterotetramer composed of AP4B1, AP4E1, AP4M1 and AP4S1.

The protein resides in the golgi apparatus. It localises to the trans-Golgi network membrane. It is found in the cytoplasmic vesicle. The protein localises to the cytoplasm. Its subcellular location is the cytosol. In terms of biological role, associates with the adapter-like complex 4 (AP-4) and may therefore play a role in vesicular trafficking of proteins at the trans-Golgi network. In Rattus norvegicus (Rat), this protein is AP-4 complex accessory subunit Tepsin.